The chain runs to 285 residues: ATP synthase gamma chain (285 aa).

This sequence belongs to the ATPase gamma chain family. As to quaternary structure, F-type ATPases have 2 components, CF(1) - the catalytic core - and CF(0) - the membrane proton channel. CF(1) has five subunits: alpha(3), beta(3), gamma(1), delta(1), epsilon(1). CF(0) has three main subunits: a, b and c.

It localises to the cell membrane. Its function is as follows. Produces ATP from ADP in the presence of a proton gradient across the membrane. The gamma chain is believed to be important in regulating ATPase activity and the flow of protons through the CF(0) complex. In Halalkalibacterium halodurans (strain ATCC BAA-125 / DSM 18197 / FERM 7344 / JCM 9153 / C-125) (Bacillus halodurans), this protein is ATP synthase gamma chain.